Here is a 124-residue protein sequence, read N- to C-terminus: Fluoride-specific ion channel FluC (124 aa).

4 consecutive transmembrane segments (helical) span residues 4–24, 35–55, 62–82, and 95–115; these read VLFV…ISLL, FGTL…FALG, PEFK…FSTF, and LVKA…VVYL. Na(+)-binding residues include glycine 74 and threonine 77.

The protein belongs to the fluoride channel Fluc/FEX (TC 1.A.43) family.

The protein localises to the cell inner membrane. The enzyme catalyses fluoride(in) = fluoride(out). With respect to regulation, na(+) is not transported, but it plays an essential structural role and its presence is essential for fluoride channel function. In terms of biological role, fluoride-specific ion channel. Important for reducing fluoride concentration in the cell, thus reducing its toxicity. The polypeptide is Fluoride-specific ion channel FluC (Shewanella pealeana (strain ATCC 700345 / ANG-SQ1)).